The sequence spans 94 residues: Large ribosomal subunit protein uL23 (94 aa).

This sequence belongs to the universal ribosomal protein uL23 family. Part of the 50S ribosomal subunit. Contacts protein L29, and trigger factor when it is bound to the ribosome.

Functionally, one of the early assembly proteins it binds 23S rRNA. One of the proteins that surrounds the polypeptide exit tunnel on the outside of the ribosome. Forms the main docking site for trigger factor binding to the ribosome. This chain is Large ribosomal subunit protein uL23, found in Symbiobacterium thermophilum (strain DSM 24528 / JCM 14929 / IAM 14863 / T).